The sequence spans 287 residues: MASGREIKTKIKSVQNTRKVTRALEMVSASKIRKAQDRMKTSRPYAQAMKQVIGHLAQASTDYQHPFLVEREQVKRVGFIVISSDRGLAGGLNNNLFRKLLGEAKAWQDKGAEVDMVTIGQKASTFFRRVKVNMVGSVTHIGDVPKLESLIGVIKVMLDAFTEGKIDRVYLVYNRFINTMTQKASFDQLLPLPAAEKQVAHHDWDYLYEPDAATVLEHVMTRYIESLVYQALLENVASEHAARMVAMKSASDNANKLIGDLQLVYNKARQAAITQEISEIVGGAAAV.

The protein belongs to the ATPase gamma chain family. In terms of assembly, F-type ATPases have 2 components, CF(1) - the catalytic core - and CF(0) - the membrane proton channel. CF(1) has five subunits: alpha(3), beta(3), gamma(1), delta(1), epsilon(1). CF(0) has three main subunits: a, b and c.

The protein resides in the cell inner membrane. Its function is as follows. Produces ATP from ADP in the presence of a proton gradient across the membrane. The gamma chain is believed to be important in regulating ATPase activity and the flow of protons through the CF(0) complex. The chain is ATP synthase gamma chain from Stenotrophomonas maltophilia (strain R551-3).